The following is a 249-amino-acid chain: 5'-nucleotidase SurE (249 aa).

Positions 9, 10, 40, and 92 each coordinate a divalent metal cation.

This sequence belongs to the SurE nucleotidase family. Requires a divalent metal cation as cofactor.

It localises to the cytoplasm. The enzyme catalyses a ribonucleoside 5'-phosphate + H2O = a ribonucleoside + phosphate. Its function is as follows. Nucleotidase that shows phosphatase activity on nucleoside 5'-monophosphates. The polypeptide is 5'-nucleotidase SurE (Shewanella sp. (strain ANA-3)).